The primary structure comprises 597 residues: Protein IQ-DOMAIN 29 (597 aa).

The tract at residues 1 to 31 is disordered; the sequence is MGKTPSPGKWIKSLLGKKSSKSSLEKGGEKL. 3 consecutive IQ domains span residues 106 to 134, 135 to 153, and 157 to 183; these read LEEA…GITR, VQAV…ATYS, and GIVK…QKTN. The segment at 159-173 is calmodulin-binding; it reads VKVQALVRGKKARSS. The Nuclear localization signal 1 signature appears at 264–271; the sequence is KKRSFQAV. Disordered stretches follow at residues 268-379 and 407-597; these read FQAV…KKEI and LIPV…EWKR. The segment covering 289–300 has biased composition (low complexity); sequence STTANSSTSRST. The span at 319-329 shows a compositional bias: basic and acidic residues; sequence ELSKIENDKSK. The Nuclear localization signal 2 motif lies at 356–363; the sequence is HKKASLSN. Basic and acidic residues predominate over residues 414 to 463; it reads KESDLDKDEKSLVLDKPEQDELRTAERDDKAEEELKTAERDDSAEEKIQE. The span at 467–480 shows a compositional bias: polar residues; that stretch reads QISSENGNVASENT. Residues 481-500 show a composition bias toward basic and acidic residues; sequence KPSDRRASLPAKIENHHQDD. Over residues 572–584 the composition is skewed to polar residues; it reads GSMNSDRSFSSSK. Residues 585 to 597 are compositionally biased toward basic and acidic residues; the sequence is DIGDKSTKAEWKR.

It belongs to the IQD family. In terms of assembly, binds to multiple calmodulin (CaM) in the presence of Ca(2+) and CaM-like proteins.

The protein localises to the nucleus. It is found in the nucleus envelope. Its subcellular location is the cytoplasm. It localises to the cytoskeleton. The protein resides in the cell membrane. May be involved in cooperative interactions with calmodulins or calmodulin-like proteins. Recruits calmodulin proteins to microtubules, thus being a potential scaffold in cellular signaling and trafficking. May associate with nucleic acids and regulate gene expression at the transcriptional or post-transcriptional level. In Arabidopsis thaliana (Mouse-ear cress), this protein is Protein IQ-DOMAIN 29.